The following is a 460-amino-acid chain: Adenylosuccinate lyase (460 aa).

N(6)-(1,2-dicarboxyethyl)-AMP contacts are provided by residues 15–16, 88–90, and 120–121; these read RY, NHD, and TS. Catalysis depends on His169, which acts as the Proton donor/acceptor. Gln245 contacts N(6)-(1,2-dicarboxyethyl)-AMP. Ser293 (proton donor/acceptor) is an active-site residue. N(6)-(1,2-dicarboxyethyl)-AMP-binding positions include Ser294, 299–301, Asn307, Arg333, and 338–342; these read KIN and STVLR.

The protein belongs to the lyase 1 family. Adenylosuccinate lyase subfamily. In terms of assembly, homotetramer. Residues from neighboring subunits contribute catalytic and substrate-binding residues to each active site.

The enzyme catalyses N(6)-(1,2-dicarboxyethyl)-AMP = fumarate + AMP. It carries out the reaction (2S)-2-[5-amino-1-(5-phospho-beta-D-ribosyl)imidazole-4-carboxamido]succinate = 5-amino-1-(5-phospho-beta-D-ribosyl)imidazole-4-carboxamide + fumarate. Its pathway is purine metabolism; AMP biosynthesis via de novo pathway; AMP from IMP: step 2/2. It functions in the pathway purine metabolism; IMP biosynthesis via de novo pathway; 5-amino-1-(5-phospho-D-ribosyl)imidazole-4-carboxamide from 5-amino-1-(5-phospho-D-ribosyl)imidazole-4-carboxylate: step 2/2. Functionally, catalyzes two reactions in de novo purine nucleotide biosynthesis. Catalyzes the breakdown of 5-aminoimidazole- (N-succinylocarboxamide) ribotide (SAICAR or 2-[5-amino-1-(5-phospho-beta-D-ribosyl)imidazole-4-carboxamido]succinate) to 5-aminoimidazole-4-carboxamide ribotide (AICAR or 5-amino-1-(5-phospho-beta-D-ribosyl)imidazole-4-carboxamide) and fumarate, and of adenylosuccinate (ADS or N(6)-(1,2-dicarboxyethyl)-AMP) to adenosine monophosphate (AMP) and fumarate. The protein is Adenylosuccinate lyase (purB) of Buchnera aphidicola subsp. Baizongia pistaciae (strain Bp).